The sequence spans 48 residues: Cathepsin B (48 aa).

This sequence belongs to the peptidase C1 family. As to quaternary structure, dimer of a heavy chain and a light chain cross-linked by a disulfide bond.

It is found in the lysosome. The catalysed reaction is Hydrolysis of proteins with broad specificity for peptide bonds. Preferentially cleaves -Arg-Arg-|-Xaa bonds in small molecule substrates (thus differing from cathepsin L). In addition to being an endopeptidase, shows peptidyl-dipeptidase activity, liberating C-terminal dipeptides.. Thiol protease which is believed to participate in intracellular degradation and turnover of proteins. Has also been implicated in tumor invasion and metastasis. The protein is Cathepsin B (CTSB) of Coturnix japonica (Japanese quail).